We begin with the raw amino-acid sequence, 367 residues long: Protein-glutamate methylesterase/protein-glutamine glutaminase 2 (367 aa).

The Response regulatory domain maps to arginine 15 to glutamate 132. Aspartate 66 bears the 4-aspartylphosphate mark. The CheB-type methylesterase domain maps to lysine 172 to arginine 367. Active-site residues include serine 184, histidine 211, and aspartate 311.

The protein belongs to the CheB family. Phosphorylated by CheA. Phosphorylation of the N-terminal regulatory domain activates the methylesterase activity.

It is found in the cytoplasm. The catalysed reaction is [protein]-L-glutamate 5-O-methyl ester + H2O = L-glutamyl-[protein] + methanol + H(+). It catalyses the reaction L-glutaminyl-[protein] + H2O = L-glutamyl-[protein] + NH4(+). Involved in chemotaxis. Part of a chemotaxis signal transduction system that modulates chemotaxis in response to various stimuli. Catalyzes the demethylation of specific methylglutamate residues introduced into the chemoreceptors (methyl-accepting chemotaxis proteins or MCP) by CheR. Also mediates the irreversible deamidation of specific glutamine residues to glutamic acid. The sequence is that of Protein-glutamate methylesterase/protein-glutamine glutaminase 2 from Methanosarcina mazei (strain ATCC BAA-159 / DSM 3647 / Goe1 / Go1 / JCM 11833 / OCM 88) (Methanosarcina frisia).